The following is a 772-amino-acid chain: Delta-like protein A (772 aa).

An N-terminal signal peptide occupies residues M1 to A20. Topologically, residues S21–T536 are extracellular. The DSL domain occupies F179–C223. Disulfide bonds link C181-C190, C194-C206, C214-C223, C228-C239, C232-C245, C259-C270, C265-C276, C278-C287, C294-C306, C300-C316, C318-C327, C334-C345, C339-C354, C356-C365, C372-C383, C377-C393, C395-C404, C411-C422, C416-C431, C433-C442, C449-C460, C454-C469, C471-C480, C487-C498, C492-C507, and C509-C518. 3 consecutive EGF-like domains span residues E225–D257, D257–N288, and D290–E328. The region spanning E330 to E366 is the EGF-like 4; calcium-binding domain. EGF-like domains follow at residues S368–E405, K407–D443, A445–S481, and P483–Q519. N479 is a glycosylation site (N-linked (GlcNAc...) asparagine). Residues A537–V557 traverse the membrane as a helical segment. At C558 to V772 the chain is on the cytoplasmic side. Residues E688–E722 form a disordered region. The span at K696 to E722 shows a compositional bias: basic and acidic residues.

In terms of assembly, interacts with mib. Ubiquitinated by mib, leading to its endocytosis and subsequent degradation. Ubiquitinated by the ECS(ASB11) complex, leading to its degradation by the proteasome. Expressed in nervous system. In the developing nervous system, it is expressed in overlapping regions with deltaB (dlb) and deltaD (dld); in the neural plate, dla is expressed in patches of contiguous cells with dld, while dlb is confined to scattered cells within those patches that will differentiate as neurons. In 24 hours embryos, expressed in the hindbrain in stripes adjacent to rhombomere boundaries, but not in the actual boundary cells. During gastrulation and tail formation, expressed in embryonic midline cells. Expressed in hair cells of inner ear.

The protein localises to the membrane. Its function is as follows. Acts as a ligand for Notch receptors and is involved in primary neurogenesis. Can activate Notch receptors, thereby playing a key role in lateral inhibition, a process that prevents the immediate neighbors of each nascent neural cell from simultaneously embarking on neural differentiation. Required for boundary formation during segmentation of the hindbrain. Required for midline cell fate specification prior to germ layer formation; regulates specification of floorplate, notochord and hypochord. In inner ear, it prevents adjacent cells from adopting the same cell fate. Plays a role in angiogenesis. The polypeptide is Delta-like protein A (dla) (Danio rerio (Zebrafish)).